The following is a 134-amino-acid chain: Large ribosomal subunit protein bL20 (134 aa).

It belongs to the bacterial ribosomal protein bL20 family.

In terms of biological role, binds directly to 23S ribosomal RNA and is necessary for the in vitro assembly process of the 50S ribosomal subunit. It is not involved in the protein synthesizing functions of that subunit. The chain is Large ribosomal subunit protein bL20 from Rhizobium meliloti (strain 1021) (Ensifer meliloti).